The following is a 270-amino-acid chain: Sorting nexin-11 (270 aa).

A PX domain is found at 16–132 (VITVRVQDPR…HLFLQSQLSV (117 aa)). Residues arginine 59, lysine 85, and arginine 99 each coordinate a 1,2-diacyl-sn-glycero-3-phospho-(1D-myo-inositol-3-phosphate). Residues 135-139 (IEACV) form an important for membrane trafficking region. Residues 168-177 (GSSHLAEGDQ) are compositionally biased toward basic and acidic residues. Disordered regions lie at residues 168–244 (GSSH…LSAS) and 251–270 (LGGG…VLEK). Positions 218 to 227 (LESPTLPPTS) are enriched in pro residues.

This sequence belongs to the sorting nexin family. As to quaternary structure, monomer. Interacts with TRPV3; this interaction promotes TRPV3 trafficking from the cell membrane to lysosome for degradation.

The protein localises to the cell membrane. Its subcellular location is the endosome. It is found in the cytoplasm. Phosphoinositide-binding protein involved in protein sorting and membrane trafficking in endosomes. Regulates the levels of TRPV3 by promoting its trafficking from the cell membrane to lysosome for degradation. This chain is Sorting nexin-11 (SNX11), found in Bos taurus (Bovine).